The chain runs to 718 residues: Polyribonucleotide nucleotidyltransferase (718 aa).

D496 and D502 together coordinate Mg(2+). Positions 563–622 (PRLLTIKIDSDMIGLVIGPGGKTIKGITEETGAKIDIEDDGTVTISAVDENKAKRARNII) constitute a KH domain. The region spanning 632–700 (GDVYAGRITR…NKGRINLTRL (69 aa)) is the S1 motif domain.

The protein belongs to the polyribonucleotide nucleotidyltransferase family. Requires Mg(2+) as cofactor.

The protein resides in the cytoplasm. The catalysed reaction is RNA(n+1) + phosphate = RNA(n) + a ribonucleoside 5'-diphosphate. Its function is as follows. Involved in mRNA degradation. Catalyzes the phosphorolysis of single-stranded polyribonucleotides processively in the 3'- to 5'-direction. This chain is Polyribonucleotide nucleotidyltransferase, found in Nostoc punctiforme (strain ATCC 29133 / PCC 73102).